Consider the following 85-residue polypeptide: Cell division topological specificity factor (85 aa).

The protein belongs to the MinE family.

Its function is as follows. Prevents the cell division inhibition by proteins MinC and MinD at internal division sites while permitting inhibition at polar sites. This ensures cell division at the proper site by restricting the formation of a division septum at the midpoint of the long axis of the cell. The protein is Cell division topological specificity factor of Xanthomonas euvesicatoria pv. vesicatoria (strain 85-10) (Xanthomonas campestris pv. vesicatoria).